Here is a 213-residue protein sequence, read N- to C-terminus: Octanoyltransferase (213 aa).

Residues 28–203 (GTSPETLLLL…RFPFLLDERL (176 aa)) form the BPL/LPL catalytic domain. Substrate is bound by residues 66-73 (RGGDVTFH), 133-135 (SIG), and 146-148 (GFA). Cys-164 functions as the Acyl-thioester intermediate in the catalytic mechanism.

Belongs to the LipB family.

It localises to the cytoplasm. It catalyses the reaction octanoyl-[ACP] + L-lysyl-[protein] = N(6)-octanoyl-L-lysyl-[protein] + holo-[ACP] + H(+). The protein operates within protein modification; protein lipoylation via endogenous pathway; protein N(6)-(lipoyl)lysine from octanoyl-[acyl-carrier-protein]: step 1/2. Catalyzes the transfer of endogenously produced octanoic acid from octanoyl-acyl-carrier-protein onto the lipoyl domains of lipoate-dependent enzymes. Lipoyl-ACP can also act as a substrate although octanoyl-ACP is likely to be the physiological substrate. This Geobacter metallireducens (strain ATCC 53774 / DSM 7210 / GS-15) protein is Octanoyltransferase.